A 420-amino-acid polypeptide reads, in one-letter code: Gamma-glutamyl phosphate reductase (420 aa).

It belongs to the gamma-glutamyl phosphate reductase family.

It localises to the cytoplasm. It catalyses the reaction L-glutamate 5-semialdehyde + phosphate + NADP(+) = L-glutamyl 5-phosphate + NADPH + H(+). Its pathway is amino-acid biosynthesis; L-proline biosynthesis; L-glutamate 5-semialdehyde from L-glutamate: step 2/2. Functionally, catalyzes the NADPH-dependent reduction of L-glutamate 5-phosphate into L-glutamate 5-semialdehyde and phosphate. The product spontaneously undergoes cyclization to form 1-pyrroline-5-carboxylate. The protein is Gamma-glutamyl phosphate reductase of Streptococcus pneumoniae serotype 4 (strain ATCC BAA-334 / TIGR4).